Here is a 91-residue protein sequence, read N- to C-terminus: Glycophorin-B (91 aa).

The signal sequence occupies residues 1 to 19 (MYGKIIFVLLLSEIVSISA). The Extracellular portion of the chain corresponds to 20–59 (LSTTEVAMHTSTSSSVTKSYISSQTNGETGQLVHRFTVPA). O-linked (GalNAc...) threonine glycosylation occurs at Thr-36. A glycan (O-linked (GalNAc...) serine) is linked at Ser-38. The chain crosses the membrane as a helical span at residues 60-81 (PVVIILIILCVMAGIIGTILLI). Topologically, residues 82–91 (SYSIRRLIKA) are cytoplasmic.

It belongs to the glycophorin-A family. Component of the ankyrin-1 complex in the erythrocyte, composed of ANK1, RHCE, RHAG, SLC4A1, EPB42, GYPA, GYPB and AQP1. Interacts (via the N-terminal) with RHAG; this interaction bridges the (RHAG)2(RHCE) heterotrimer with the SLC4A1 Band 3 I dimer complexed with GYPA. In terms of processing, the N-terminal extracellular domain is heavily glycosylated on serine and threonine residues.

It localises to the cell membrane. Its function is as follows. Component of the ankyrin-1 complex, a multiprotein complex involved in the stability and shape of the erythrocyte membrane. The sequence is that of Glycophorin-B from Homo sapiens (Human).